The following is a 527-amino-acid chain: MVLVEHFCIHRCTPDGVIEMLWMYQSELMGNKQPILNKDEMAANNPELEALKNQIALFHGMYGFSVETKDILKEQPTDSKSTTSSAPKNSPFSLLESYDCLQVDTATVQKVLIKRPEGCRELHSCNVLMNNDEKNTLSLTPSIFLSVMKPCPKTSVLVTTVAALWEQFNIFHGSYLFDEIEKKSSFEIIDRWWTSVLSPLECGGYLLKSLSVLPVLHSLDDPLVKKMNDVIRKEDGTMGSLILFTKSGQPRLLSLQGLRLKPEFRNLLSYYCSHNYQHLIENESADINIAHRPLTTLFSDTDSNLAITNEVGEMTLRIFCLKKKSNKRLLAILWKLGQTSSEEVSNAFTNYIIGLAPLSQSVFDSQASTGFNFKIQKRVETELDMFWYIVANCTTGLAVVNTDFPLNDAHHLWNHLENLCNNQSFNSCQLQKITRGYWISLQQKEYNSRIYVDTVADQSQTYTPTRRFTKQGSQGDFNAIHSRKVPVTHTFTYILISKTNRWNSLHDTKAKIQRFIDQFDLTPTLYD.

This is an uncharacterized protein from Schizosaccharomyces pombe (strain 972 / ATCC 24843) (Fission yeast).